The sequence spans 232 residues: MSQPKPILYYDERSPPVRSCLMLIKLLDIDVELRFVNLFKGEQFQKDFLALNPQHSVPTLVHGDLVLTDSHAILIHLAEKFDEGGSLWPQEHAERMKVLNLLLFECSFLFRRDSDFMSATVRQGFANVDVAHHERKLTEAYIIMERYLENSDFMAGPQLTLADLSIVTTLSTVNLMFPLSQFPRLRRWFTAMQQLDAYEANCSGLEKLRQTMESVGSFQFPSSSAVVTEKVE.

A GST N-terminal domain is found at 4 to 85 (PKPILYYDER…HLAEKFDEGG (82 aa)). Positions 91-218 (EHAERMKVLN…RQTMESVGSF (128 aa)) constitute a GST C-terminal domain.

Belongs to the GST superfamily. Epsilon family. As to expression, expressed in the adult ovary (at protein level).

The catalysed reaction is RX + glutathione = an S-substituted glutathione + a halide anion + H(+). Its function is as follows. Conjugation of reduced glutathione to a wide number of exogenous and endogenous hydrophobic electrophiles. Essential for ecdysteroid biosynthesis. May be involved in detoxification. This chain is Glutathione S-transferase E14, found in Drosophila melanogaster (Fruit fly).